The primary structure comprises 222 residues: Ribonuclease T (222 aa).

The region spanning 20–194 is the Exonuclease domain; it reads VVIDVETAGF…YDTERTAELF (175 aa). Asp-23, Glu-25, His-181, and Asp-186 together coordinate Mg(2+). His-181 (proton donor/acceptor) is an active-site residue.

The protein belongs to the RNase T family. In terms of assembly, homodimer. It depends on Mg(2+) as a cofactor.

Its function is as follows. Trims short 3' overhangs of a variety of RNA species, leaving a one or two nucleotide 3' overhang. Responsible for the end-turnover of tRNA: specifically removes the terminal AMP residue from uncharged tRNA (tRNA-C-C-A). Also appears to be involved in tRNA biosynthesis. In Shewanella oneidensis (strain ATCC 700550 / JCM 31522 / CIP 106686 / LMG 19005 / NCIMB 14063 / MR-1), this protein is Ribonuclease T.